Reading from the N-terminus, the 197-residue chain is Small ribosomal subunit protein uS4 (197 aa).

Positions 87–147 (LRLDNVLFRL…EKSKSSARYK (61 aa)) constitute an S4 RNA-binding domain.

Belongs to the universal ribosomal protein uS4 family. Part of the 30S ribosomal subunit. Contacts protein S5. The interaction surface between S4 and S5 is involved in control of translational fidelity.

Functionally, one of the primary rRNA binding proteins, it binds directly to 16S rRNA where it nucleates assembly of the body of the 30S subunit. Its function is as follows. With S5 and S12 plays an important role in translational accuracy. In Lachnospira eligens (strain ATCC 27750 / DSM 3376 / VPI C15-48 / C15-B4) (Eubacterium eligens), this protein is Small ribosomal subunit protein uS4.